Reading from the N-terminus, the 290-residue chain is Ribosomal RNA small subunit methyltransferase A (290 aa).

S-adenosyl-L-methionine contacts are provided by Asn-27, Leu-29, Gly-54, Glu-75, Asp-100, and Asn-125.

The protein belongs to the class I-like SAM-binding methyltransferase superfamily. rRNA adenine N(6)-methyltransferase family. RsmA subfamily.

Its subcellular location is the cytoplasm. The enzyme catalyses adenosine(1518)/adenosine(1519) in 16S rRNA + 4 S-adenosyl-L-methionine = N(6)-dimethyladenosine(1518)/N(6)-dimethyladenosine(1519) in 16S rRNA + 4 S-adenosyl-L-homocysteine + 4 H(+). Specifically dimethylates two adjacent adenosines (A1518 and A1519) in the loop of a conserved hairpin near the 3'-end of 16S rRNA in the 30S particle. May play a critical role in biogenesis of 30S subunits. This is Ribosomal RNA small subunit methyltransferase A from Streptococcus thermophilus (strain CNRZ 1066).